A 695-amino-acid polypeptide reads, in one-letter code: Potassium voltage-gated channel subfamily KQT member 4 (695 aa).

A disordered region spans residues 1 to 21 (MAEAPPRRLGLGPPPGDAPRA). Residues 1-96 (MAEAPPRRLG…VYNVLERPRG (96 aa)) lie on the Cytoplasmic side of the membrane. Arginine 93 lines the a 1,2-diacyl-sn-glycero-3-phospho-(1D-myo-inositol-4,5-bisphosphate) pocket. A helical transmembrane segment spans residues 97-118 (WAFVYHVFIFLLVFSCLVLSVL). The Extracellular segment spans residues 119 to 129 (STIQEHQELAN). Residues 130–152 (ECLLILEFVMIVVFGLEYIIRVW) form a helical membrane-spanning segment. The Cytoplasmic segment spans residues 153 to 168 (SAGCCCRYRGWQGRFR). Residues 169–191 (FARKPFCVIDFIVFVASVAVIAA) traverse the membrane as a helical segment. Residue lysine 172 coordinates a 1,2-diacyl-sn-glycero-3-phospho-(1D-myo-inositol-4,5-bisphosphate). Topologically, residues 192-202 (GTQGNIFATSA) are extracellular. The helical; Voltage-sensor transmembrane segment at 203 to 223 (LRSMRFLQILRMVRMDRRGGT) threads the bilayer. A 1,2-diacyl-sn-glycero-3-phospho-(1D-myo-inositol-4,5-bisphosphate) contacts are provided by arginine 219, arginine 220, lysine 225, and serine 235. Topologically, residues 224–235 (WKLLGSVVYAHS) are cytoplasmic. A helical transmembrane segment spans residues 236–258 (KELITAWYIGFLVLIFASFLVYL). The Extracellular portion of the chain corresponds to 259–270 (AEKDANSDFSSY). Residues 271–292 (ADSLWWGTITLTTIGYGDKTPH) constitute an intramembrane region (pore-forming). A topological domain (extracellular) is located at residue threonine 293. Residues 294 to 322 (WLGRVLAAGFALLGISFFALPAGILGSGF) form a helical membrane-spanning segment. Topologically, residues 323–695 (ALKVQEQHRQ…ISRSVSTNMD (373 aa)) are cytoplasmic. The a 1,2-diacyl-sn-glycero-3-phospho-(1D-myo-inositol-4,5-bisphosphate) site is built by histidine 330 and lysine 333. The segment at 342–351 (AANLIQAAWR) is interaction with CALM. The disordered stretch occupies residues 441-483 (RMSSSQKRTGPSKQHLAPPPIPTSPSSEQVGEASSPSKVQKSW). Composition is skewed to polar residues over residues 442 to 452 (MSSSQKRTGPS) and 464 to 483 (SPSSEQVGEASSPSKVQKSW). The tract at residues 535–549 (RSVRILKFLVAKRKF) is interaction with CALM. The C-terminal assembly domain (tetramerization) stretch occupies residues 546–650 (KRKFKETLRP…SRCLRSGTSA (105 aa)). The interval 588–608 (GRGPGDRKTREKGDKGPSDTE) is disordered. Over residues 591–605 (PGDRKTREKGDKGPS) the composition is skewed to basic and acidic residues.

This sequence belongs to the potassium channel family. KQT (TC 1.A.1.15) subfamily. Kv7.4/KCNQ4 sub-subfamily. As to quaternary structure, homotetramer. Interacts (via C-terminus) with calmodulin; forms a heterooctameric structure (with 4:4 KCNQ1:CALM stoichiometry); the interaction is calcium-independent, constitutive, participates in the proper assembly of a functional channel. The interaction with calcium-free CALM controls channel trafficking whereas interaction with calcium-bound CALM regulates channel gating. May form a functional heteromultimeric channel with KCNQ3. Interacts with HSP90AB1; promotes cell surface expression of KCNQ4. As to expression, expressed in both the inner (IHCs) and the outer hair cells (OHCs) of the cochlea. Reciprocal longitudinal gradients of expression is present in IHCs and OHCs. The strongest expression in IHCs is in the base of the cochlea and in the apex for OHCs. A basal to apical gradient of expression is also present in both type I and type II spiral ganglion cells.

Its subcellular location is the basal cell membrane. The enzyme catalyses K(+)(in) = K(+)(out). Its activity is regulated as follows. Two molecules of phosphatidylinositol-4,5-bisphosphate (PIP2-I and PIP2-II) are essential to activate KCNQ4 channel by inducing the coupling of the voltage-sensing domain (VSD) and the pore-forming domain (PD). Upon channel activation, PIP2-I and PIP2-II disrupt the VSD-calmodulin/CALM interaction, causing the release of CALM from the VSD which triggers the opening of the gate. Calcium suppresses KCNQ4 channel current through calcium-bound CALM C-terminus. Therefore CALM acts as calcium sensor that controls channel activity. In terms of biological role, pore-forming subunit of the voltage-gated potassium (Kv) channel involved in the regulation of sensory cells excitability in the cochlea. KCNQ4/Kv7.4 channel is composed of 4 pore-forming subunits assembled as tetramers. Promotes the outflow of potassium ions in the repolarization phase of action potential which plays a role in regulating membrane potential of excitable cells. The channel conducts a slowly activating and deactivating current. Current often shows some inward rectification at positive potentials. Channel may be selectively permeable in vitro to other cations besides potassium, in decreasing order of affinity K(+) = Rb(+) &gt; Cs(+) &gt; Na(+). Important for normal physiological function of inner ear such as sensory perception of sound. In Rattus norvegicus (Rat), this protein is Potassium voltage-gated channel subfamily KQT member 4.